Reading from the N-terminus, the 1523-residue chain is Lysophospholipase nte1 (1523 aa).

At 1–66 (MADGVTLVDS…LPPVPTTMAG (66 aa)) the chain is on the cytoplasmic side. Residues 67 to 87 (WIGWVFSFFFQVIPSVLYWVI) form a helical membrane-spanning segment. Residues 88 to 109 (TFSTITLPTWLFTLFSMSLTFT) are Lumenal-facing. A helical membrane pass occupies residues 110 to 130 (MNFTTLLLIVLAMVSTISWFI). The Cytoplasmic segment spans residues 131-1523 (RYRFLNMYSR…RTMAPRRASI (1393 aa)). Disordered regions lie at residues 309 to 384 (VPNS…KSVH) and 524 to 545 (RAAT…GVSP). Basic residues predominate over residues 370-382 (ESRKHSSRKRRKS). Residues 681 to 800 (GGTS…GAVA) and 841 to 961 (RLTS…IAQR) contribute to the a nucleoside 3',5'-cyclic phosphate site. Positions 1220-1384 (LVLGGGGARG…IDNLTVDHMK (165 aa)) constitute a PNPLA domain. The GXGXXG motif lies at 1224 to 1229 (GGGARG). The GXSXG motif lies at 1251-1255 (GTSIG). S1253 serves as the catalytic Nucleophile. D1371 functions as the Proton acceptor in the catalytic mechanism. The DGA/G motif lies at 1371–1373 (DGG). Positions 1502–1523 (LPEETEEKKKLQRTMAPRRASI) are disordered.

The protein belongs to the NTE family.

Its subcellular location is the endoplasmic reticulum membrane. The enzyme catalyses a 1-acyl-sn-glycero-3-phosphocholine + H2O = sn-glycerol 3-phosphocholine + a fatty acid + H(+). Its activity is regulated as follows. Inhibited by organophosphorus esters. Intracellular phospholipase B that catalyzes the double deacylation of phosphatidylcholine (PC) to glycerophosphocholine (GroPCho). Plays an important role in membrane lipid homeostasis. Responsible for the rapid PC turnover in response to inositol, elevated temperatures, or when choline is present in the growth medium. The sequence is that of Lysophospholipase nte1 (nte1) from Neosartorya fischeri (strain ATCC 1020 / DSM 3700 / CBS 544.65 / FGSC A1164 / JCM 1740 / NRRL 181 / WB 181) (Aspergillus fischerianus).